The primary structure comprises 338 residues: 1-aminocyclopropane-1-carboxylate deaminase (338 aa).

N6-(pyridoxal phosphate)lysine is present on lysine 51. The active-site Nucleophile is serine 78.

This sequence belongs to the ACC deaminase/D-cysteine desulfhydrase family. Homotrimer. The cofactor is pyridoxal 5'-phosphate.

It carries out the reaction 1-aminocyclopropane-1-carboxylate + H2O = 2-oxobutanoate + NH4(+). Catalyzes a cyclopropane ring-opening reaction, the irreversible conversion of 1-aminocyclopropane-1-carboxylate (ACC) to ammonia and alpha-ketobutyrate. Allows growth on ACC as a nitrogen source. This is 1-aminocyclopropane-1-carboxylate deaminase from Paraburkholderia phytofirmans (strain DSM 17436 / LMG 22146 / PsJN) (Burkholderia phytofirmans).